The primary structure comprises 430 residues: Dihydroorotase (430 aa).

Positions 61 and 63 each coordinate Zn(2+). Substrate-binding positions include 63–65 and N95; that span reads HLR. Residues D153, H180, and H233 each coordinate Zn(2+). N279 lines the substrate pocket. D306 contacts Zn(2+). D306 is an active-site residue. H310 is a substrate binding site.

The protein belongs to the metallo-dependent hydrolases superfamily. DHOase family. Class I DHOase subfamily. It depends on Zn(2+) as a cofactor.

The enzyme catalyses (S)-dihydroorotate + H2O = N-carbamoyl-L-aspartate + H(+). The protein operates within pyrimidine metabolism; UMP biosynthesis via de novo pathway; (S)-dihydroorotate from bicarbonate: step 3/3. Its function is as follows. Catalyzes the reversible cyclization of carbamoyl aspartate to dihydroorotate. The protein is Dihydroorotase of Caldicellulosiruptor saccharolyticus (strain ATCC 43494 / DSM 8903 / Tp8T 6331).